A 1862-amino-acid chain; its full sequence is Ankyrin-1 (1862 aa).

An 89 kDa domain region spans residues 1–827 (MGFCKADAAT…DELVGSKAER (827 aa)). ANK repeat units follow at residues 40-69 (NGLN…ILET), 73-102 (KGNT…NVNA), 106-135 (KGFT…NQNV), 139-168 (DGFT…KGKV), 170-197 (LPAL…NPDV), 201-230 (TGFT…SVNF), 234-263 (NGIT…QIET), 267-296 (DELT…PIQA), 300-329 (NGLS…EIDD), 333-362 (DHLT…KPNS), 366-395 (NGFT…SIDA), 399-428 (SGLT…SPNV), 432-461 (KVET…KANA), 465-494 (DDQT…SPNL), 498-527 (AGHT…SQAC), 531-560 (KGFT…HPNA), 564-593 (NGLT…SPHS), 597-626 (NGYT…SANA), 630-659 (QGVT…NGNL), 663-692 (SGLT…TVDA), 696-725 (MGYT…DVNA), 729-758 (LGYS…SPNE), and 762-791 (NGTT…ETSV). Residue Lys55 is modified to Phosphoserine. Asn101 is subject to (3S)-3-hydroxyasparagine; by HIF1AN; partial. A (3S)-3-hydroxyasparagine; by HIF1AN modification is found at Asn229. The residue at position 425 (Ser425) is a Phosphoserine. 2 positions are modified to (3S)-3-hydroxyasparagine; by HIF1AN: Asn427 and Asn460. (3S)-3-hydroxyasparagine; by HIF1AN occurs at positions 625 and 658. Asp691 carries the (3S)-3-hydroxyaspartate; by HIF1AN modification. At Asn724 the chain carries (3S)-3-hydroxyasparagine; by HIF1AN. Ser755 is modified (phosphoserine). The residue at position 757 (Asn757) is a (3S)-3-hydroxyasparagine; by HIF1AN. Phosphoserine occurs at positions 777, 813, 830, and 852. Residues 812-834 (VSEDEGDELVGSKAERRDSRDVG) are disordered. Over residues 824 to 834 (KAERRDSRDVG) the composition is skewed to basic and acidic residues. Thr862 carries the post-translational modification Phosphothreonine. The segment at 872-900 (DQEQASKEYDEDSLIPSSPATETSDNISP) is disordered. Residues 886-900 (IPSSPATETSDNISP) show a composition bias toward polar residues. 2 consecutive ZU5 domains span residues 909–1064 (FLVS…IMSR) and 1066–1212 (CQDY…LSDC). Thr957 carries the post-translational modification Phosphothreonine. Residue Tyr1069 is modified to Phosphotyrosine. Position 1078 is a phosphoserine (Ser1078). The tract at residues 1197–1331 (ANFTTNVSAR…PVKVRDSSRE (135 aa)) is UPA domain. Residues Thr1374 and Thr1376 each carry the phosphothreonine modification. 2 positions are modified to phosphoserine: Ser1386 and Ser1388. The 55 kDa regulatory domain stretch occupies residues 1387-1862 (ESRLGFTSDT…KRASLKRGKQ (476 aa)). Thr1396 carries the post-translational modification Phosphothreonine. The Death domain maps to 1399–1483 (VEMRMAVIRE…EIVNMLEGSG (85 aa)). Phosphoserine is present on residues Ser1424, Ser1473, and Ser1482. The interval 1481-1506 (GSGRQSRNLKPERRHGDREYSLSPSQ) is disordered. Over residues 1489-1500 (LKPERRHGDREY) the composition is skewed to basic and acidic residues. Residues Ser1519, Ser1529, and Ser1612 each carry the phosphoserine modification. Disordered stretches follow at residues 1598-1720 (EGAH…GPHS) and 1744-1767 (VSTR…KEPS). The segment covering 1637–1647 (EGQRSEKKRQE) has biased composition (basic and acidic residues). Positions 1648–1666 (VSGTEQDTETEVSLVSGQQ) are enriched in polar residues. Residues Ser1660, Ser1675, and Ser1685 each carry the phosphoserine modification. Over residues 1681 to 1694 (VLDRSQARTLDWDK) the composition is skewed to basic and acidic residues. Positions 1695–1720 (QGSTAVHPQEATQSSWQEEVTQGPHS) are enriched in polar residues.

In terms of assembly, component of the ankyrin-1 complex in the erythrocyte, composed of ANK1, RHCE, RHAG, SLC4A1, EPB42, GYPA, GYPB and AQP1. Interacts with a number of integral membrane proteins and cytoskeletal proteins. Interacts (via N-terminus) with SPTB/spectrin (beta chain). Also interacts with TTN/titin. Isoform Mu17 interacts with OBSCN isoform 3/obscurin. Interacts with HIF1AN. Interacts (via ANK 1-5 repeats) with RHCE; this interaction mediates the primary membrane attachment site for ANK1. Interacts (via ANK 1-2 repeats) with AQP1 (via the N-terminal). Interacts (via ANK 1-13 repeats) with EPB42. Interacts directly with SLC4A1 (via the cytoplasmic domain); this interaction is mediated by the SLC4A1 Band 3-II and Band 3-III dimers. In terms of processing, regulated by phosphorylation. Acylated by palmitic acid group(s). Post-translationally, hydroxylated by HIF1AN at several asparagine and 1 aspartate residue within ANK repeat region; hydroxylation seems to increase the conformational stability of this region and may also modulate protein-protein interactions mediated by the ANK repeat region.

The protein localises to the cytoplasm. It localises to the cytoskeleton. The protein resides in the membrane. Its subcellular location is the sarcoplasmic reticulum. In terms of biological role, component of the ankyrin-1 complex, a multiprotein complex involved in the stability and shape of the erythrocyte membrane. Attaches integral membrane proteins to cytoskeletal elements; binds to the erythrocyte membrane protein band 4.2, to Na-K ATPase, to the lymphocyte membrane protein GP85, and to the cytoskeletal proteins fodrin, tubulin, vimentin and desmin. Erythrocyte ankyrins also link spectrin (beta chain) to the cytoplasmic domain of the erythrocytes anion exchange protein; they retain most or all of these binding functions. In Mus musculus (Mouse), this protein is Ankyrin-1.